A 212-amino-acid polypeptide reads, in one-letter code: MRKYIFIILIAVLLIGVNIKKIAAAANIDRHTNSTLGIDLSVGIPIFYNDLSKAYPTNLYPGGIGAIKYQYHILNNLAIGLELRYMFNFDINHSFNILNPDSSVGKIFYSVPITFSINYIFDIGELFQIPVFTNIGFSLNTYGDRNNNITNLRTFDALPTISFGSGILWNFNYKWAFGATASWWMMFEFGNSAKMAHFALVSLSVTVNVNKL.

Residues 5-25 (IFIILIAVLLIGVNIKKIAAA) form a helical membrane-spanning segment.

It is found in the membrane. This is an uncharacterized protein from Borreliella burgdorferi (strain ATCC 35210 / DSM 4680 / CIP 102532 / B31) (Borrelia burgdorferi).